Consider the following 213-residue polypeptide: Uridine kinase (213 aa).

Residue 15 to 22 participates in ATP binding; sequence GGSGSGKT.

It belongs to the uridine kinase family.

The protein localises to the cytoplasm. It catalyses the reaction uridine + ATP = UMP + ADP + H(+). It carries out the reaction cytidine + ATP = CMP + ADP + H(+). It functions in the pathway pyrimidine metabolism; CTP biosynthesis via salvage pathway; CTP from cytidine: step 1/3. The protein operates within pyrimidine metabolism; UMP biosynthesis via salvage pathway; UMP from uridine: step 1/1. This is Uridine kinase from Ligilactobacillus salivarius (strain UCC118) (Lactobacillus salivarius).